The chain runs to 263 residues: Virulence plasmid protein pGP6-D-related protein (263 aa).

The protein belongs to the UPF0137 (pGP6-D) family.

The polypeptide is Virulence plasmid protein pGP6-D-related protein (Chlamydia trachomatis serovar D (strain ATCC VR-885 / DSM 19411 / UW-3/Cx)).